A 147-amino-acid polypeptide reads, in one-letter code: Monothiol glutaredoxin-S5 (147 aa).

Residues 49–146 enclose the Glutaredoxin domain; it reads AAEVRRAVAE…PILKKAGALW (98 aa). Residue C69 coordinates [2Fe-2S] cluster. The short motif at 144-147 is the Responsive for interaction with TGA factors element; that stretch reads ALWL.

It belongs to the glutaredoxin family. CC-type subfamily.

It localises to the cytoplasm. Its subcellular location is the nucleus. Its function is as follows. May only reduce GSH-thiol disulfides, but not protein disulfides. The chain is Monothiol glutaredoxin-S5 (GRXS5) from Oryza sativa subsp. japonica (Rice).